We begin with the raw amino-acid sequence, 695 residues long: MDPSELTEPQAMVELERLAQQIRALDRAYYEDDAPTVTDAEYDALRQRNLAIEARFPDLRRADSPSLHVSGAPSAAFGRHRHLVPMLSLDNVFGREDFESFVTRAARFLGLNDDQARALRFVAEPKIDGLSISLTYEHGRFVRGTTRGDGTEGEDVTANLRTLRDVPLRLKGPAPALIEIRGEVFLSKPAFLSINAAQAEAGQKPFANPRNAAAGSLRQLDPNITARRPLSLFAYAQGFSSDRVADTHWDYLERLRQWGFTVNPLSCVVESAEAAEAFMDRIARERSGLEYDIDGVVYKVDDLALQDRLGFVGRAPRWAIAWKFPAEQAITRLTRIDIQVGRTGALTPVAILEPVNVGGVIVTRATLHNEDEIARKDVRVGDLVQIQRAGDVIPQILGVVPPGADAPPRGEAFIFPHTCPICGARAERPPGEVVWRCTGGLTCPAQVVERLIHFVSRDAFDIDGLGERTITEFHADGLLKTPADIFRLPDHEADIATREGWGTVSARNLTASVRARQTIPLARFIYALGIRRIGTSNARLLARHYGSYTHWREQMLRATTIGSDERLALGSITGIGGAIADELAAFFMEAHNLETLDDLTAMLTAIEDEDLPAQGHLSGKTVVFTGTLTTMTRPEAKAIAERLGARVTDSVSKKTDLVVLGADAGSKARKAAELGIDTLDEEGWRELAGIGPVGP.

NAD(+) is bound by residues 39–43 (DAEYD), 88–89 (SL), and E124. Residue K126 is the N6-AMP-lysine intermediate of the active site. R147, E183, K299, and K323 together coordinate NAD(+). 4 residues coordinate Zn(2+): C419, C422, C437, and C443. Residues 612 to 695 (PAQGHLSGKT…ELAGIGPVGP (84 aa)) enclose the BRCT domain.

The protein belongs to the NAD-dependent DNA ligase family. LigA subfamily. The cofactor is Mg(2+). It depends on Mn(2+) as a cofactor.

The enzyme catalyses NAD(+) + (deoxyribonucleotide)n-3'-hydroxyl + 5'-phospho-(deoxyribonucleotide)m = (deoxyribonucleotide)n+m + AMP + beta-nicotinamide D-nucleotide.. DNA ligase that catalyzes the formation of phosphodiester linkages between 5'-phosphoryl and 3'-hydroxyl groups in double-stranded DNA using NAD as a coenzyme and as the energy source for the reaction. It is essential for DNA replication and repair of damaged DNA. The polypeptide is DNA ligase (Gluconacetobacter diazotrophicus (strain ATCC 49037 / DSM 5601 / CCUG 37298 / CIP 103539 / LMG 7603 / PAl5)).